A 156-amino-acid chain; its full sequence is ATP synthase subunit b (156 aa).

The helical transmembrane segment at 7–27 threads the bilayer; sequence IFFQMLVFFVLGWFTMKFVWP.

The protein belongs to the ATPase B chain family. In terms of assembly, F-type ATPases have 2 components, F(1) - the catalytic core - and F(0) - the membrane proton channel. F(1) has five subunits: alpha(3), beta(3), gamma(1), delta(1), epsilon(1). F(0) has three main subunits: a(1), b(2) and c(10-14). The alpha and beta chains form an alternating ring which encloses part of the gamma chain. F(1) is attached to F(0) by a central stalk formed by the gamma and epsilon chains, while a peripheral stalk is formed by the delta and b chains.

The protein localises to the cell inner membrane. Its function is as follows. F(1)F(0) ATP synthase produces ATP from ADP in the presence of a proton or sodium gradient. F-type ATPases consist of two structural domains, F(1) containing the extramembraneous catalytic core and F(0) containing the membrane proton channel, linked together by a central stalk and a peripheral stalk. During catalysis, ATP synthesis in the catalytic domain of F(1) is coupled via a rotary mechanism of the central stalk subunits to proton translocation. Component of the F(0) channel, it forms part of the peripheral stalk, linking F(1) to F(0). The sequence is that of ATP synthase subunit b from Bordetella petrii (strain ATCC BAA-461 / DSM 12804 / CCUG 43448).